A 390-amino-acid polypeptide reads, in one-letter code: Guanine nucleotide exchange factor for Rab-3A (390 aa).

A disordered region spans residues 1–60; sequence MWSGQPHPDEGHPPPLEAVPVPWKSVGPCKSHRESLGGLPETPAGEEAQGEEGPAATQLD. The span at 40–58 shows a compositional bias: low complexity; sequence PETPAGEEAQGEEGPAATQ. A coiled-coil region spans residues 73-161; that stretch reads EKGSEFLKEE…AEVTALKTLV (89 aa). The disordered stretch occupies residues 166-194; that stretch reads PASPNRELHPQLLSPTKAGPRKGHLRHKS. Phosphoserine occurs at positions 168 and 179. Residues 184–194 are compositionally biased toward basic residues; that stretch reads GPRKGHLRHKS.

Belongs to the SEC2 family. As to quaternary structure, interacts with RAB3A and IHPK1 through the coiled-coil domain. This interaction is competitive. IHPK1 kinase activity is not required for this interaction.

Its function is as follows. Guanine nucleotide exchange factor (GEF) which may activate RAB3A, a GTPase that regulates synaptic vesicle exocytosis. Promotes the exchange of GDP to GTP, converting inactive GDP-bound Rab proteins into their active GTP-bound form. May also activate RAB8A and RAB8B. The chain is Guanine nucleotide exchange factor for Rab-3A (RAB3IL1) from Bos taurus (Bovine).